The sequence spans 527 residues: Putative adhesin P1-like protein MPN_500 (527 aa).

4 disordered regions span residues 1–26, 76–148, 248–269, and 468–527; these read MDDI…GSRS, GWRN…LTNY, ASGS…PEQS, and FGTD…VSGH. A compositionally biased stretch (low complexity) spans 9–26; the sequence is TSAGSSSGTSTNTSGSRS. A compositionally biased stretch (polar residues) spans 82–95; the sequence is TTSGSTGNANDTKF. The segment covering 108-117 has biased composition (low complexity); it reads SSGTNTSAGN. A compositionally biased stretch (polar residues) spans 128 to 148; that stretch reads QNGQVKTSVQEATSGDNLTNY. A compositionally biased stretch (low complexity) spans 248-262; sequence ASGSGSNTTSSPGIG. Polar residues predominate over residues 468 to 495; the sequence is FGTDHSTQPQPQSLKTTTPVFGRSSGNL. The span at 500 to 513 shows a compositional bias: gly residues; it reads SGGGAGGGSSGSGQ.

It belongs to the adhesin P1 family.

This Mycoplasma pneumoniae (strain ATCC 29342 / M129 / Subtype 1) (Mycoplasmoides pneumoniae) protein is Putative adhesin P1-like protein MPN_500.